Here is a 445-residue protein sequence, read N- to C-terminus: Cyclic GMP-AMP phosphodiesterase SMPDL3A (445 aa).

The N-terminal stretch at 1 to 22 (MALLGNFLCCLLVAWLCGPGLG) is a signal peptide. Zn(2+) contacts are provided by aspartate 42 and histidine 44. Cysteine 59 and cysteine 78 form a disulfide bridge. Asparagine 66 carries an N-linked (GlcNAc...) asparagine glycan. A Zn(2+)-binding site is contributed by aspartate 107. Histidine 111 is an ATP binding site. A glycan (N-linked (GlcNAc...) asparagine) is linked at asparagine 128. Asparagine 148 serves as a coordination point for Zn(2+). 2 residues coordinate ATP: asparagine 148 and histidine 149. 2 N-linked (GlcNAc...) asparagine glycosylation sites follow: asparagine 219 and asparagine 235. Position 249 (histidine 249) interacts with Zn(2+). Tyrosine 257 contributes to the ATP binding site. Histidine 290 and histidine 292 together coordinate Zn(2+). N-linked (GlcNAc...) asparagine glycosylation is found at asparagine 353 and asparagine 364. Disulfide bonds link cysteine 417–cysteine 421 and cysteine 427–cysteine 440.

It belongs to the acid sphingomyelinase family. In terms of assembly, monomer. Homodimer; homodimerizes following 2',3'-cGAMP-binding. It depends on Zn(2+) as a cofactor. N-glycosylated. In terms of tissue distribution, detected in blood serum (at protein level).

The protein localises to the secreted. It catalyses the reaction 2',3'-cGAMP + H2O = 5'-pGpA(2'-5') + H(+). It carries out the reaction 5'-pGpA(2'-5') + H2O = 5'-GpA(2'-5') + phosphate. The catalysed reaction is a ribonucleoside 5'-triphosphate + H2O = a ribonucleoside 5'-diphosphate + phosphate + H(+). The enzyme catalyses ATP + H2O = ADP + phosphate + H(+). With respect to regulation, requires micromolar levels of Zn(2+) for activity. Inhibited by millimolar levels of Zn(2+). In terms of biological role, cyclic-nucleotide phosphodiesterase that acts as a negative regulator of innate immunity by mediating degradation of 2',3'-cGAMP, thereby inhibiting the cGAS-STING signaling. Specifically linearizes 2',3'-cGAMP into 2'5'-bond pGpA and further hydrolyzes pGpA to produce GpA. Also has in vitro nucleotide phosphodiesterase activity with nucleoside triphosphates, such as ATP. Has in vitro activity with p-nitrophenyl-TMP. Has lower activity with nucleoside diphosphates, and no activity with nucleoside monophosphates. Has in vitro activity with CDP-choline, giving rise to CMP and phosphocholine. Has in vitro activity with CDP-ethanolamine. Does not have sphingomyelin phosphodiesterase activity. The chain is Cyclic GMP-AMP phosphodiesterase SMPDL3A from Mus musculus (Mouse).